We begin with the raw amino-acid sequence, 1250 residues long: Cell adhesion molecule-related/down-regulated by oncogenes (1250 aa).

Positions 1-24 (MHPDLGPLWTLLYVLVILCSSVSS) are cleaved as a signal peptide. The Extracellular portion of the chain corresponds to 25–962 (DLAPYFISEP…SPARSSDMLY (938 aa)). Ig-like C2-type domains follow at residues 28–113 (PYFI…ATVS), 119–203 (DFDS…LKVE), 224–302 (PALS…KHVT), 309–395 (EHAS…GRLQ), and 404–515 (PVIV…AFLT). An intrachain disulfide couples cysteine 49 to cysteine 96. N-linked (GlcNAc...) asparagine glycosylation is found at asparagine 99, asparagine 179, asparagine 286, asparagine 293, asparagine 341, and asparagine 426. Disulfide bonds link cysteine 140/cysteine 190 and cysteine 242/cysteine 289. 2 disulfide bridges follow: cysteine 332–cysteine 379 and cysteine 425–cysteine 499. The segment covering 524–534 (KAESVTPSEAS) has biased composition (polar residues). Residues 524–547 (KAESVTPSEASQNDERDPQDGSES) are disordered. The N-linked (GlcNAc...) asparagine glycan is linked to asparagine 569. Fibronectin type-III domains follow at residues 572–673 (VPDA…SKEK), 719–814 (APDR…VAGF), and 822–922 (PITG…TKVK). N-linked (GlcNAc...) asparagine glycosylation is present at asparagine 869. The interval 929–951 (DYPVKELSTPPSSSGNAGNVGPA) is disordered. A helical membrane pass occupies residues 963 to 983 (LIVGCVLGVMVLILMVFIALC). Over 984-1250 (LWKSRQQSTI…SVVLQQAQET (267 aa)) the chain is Cytoplasmic. Disordered regions lie at residues 1178–1208 (DNIS…AEDK) and 1223–1250 (DCGE…AQET). A compositionally biased stretch (basic and acidic residues) spans 1193-1208 (EFSRGDSSGHSEAEDK).

In terms of assembly, part of a complex that contains BOC, CDON, NEO1, cadherins and CTNNB1. Interacts with NTN3. Interacts with DHH, IHH and SHH. N-glycosylated. Highly expressed in somites and the dorsal lips of the neural tube during embryogenesis. Detected at very low levels in adult tissues.

The protein localises to the cell membrane. Functionally, component of a cell-surface receptor complex that mediates cell-cell interactions between muscle precursor cells. Promotes differentiation of myogenic cells. Required for response to NTN3 and activation of NFATC3. The protein is Cell adhesion molecule-related/down-regulated by oncogenes (Cdon) of Mus musculus (Mouse).